The chain runs to 310 residues: Oxygen-dependent coproporphyrinogen-III oxidase (310 aa).

S97 serves as a coordination point for substrate. A divalent metal cation-binding residues include H101 and H111. H111 functions as the Proton donor in the catalytic mechanism. N113–R115 is a substrate binding site. 2 residues coordinate a divalent metal cation: H150 and H180. Residues Y245 to R280 are important for dimerization. G263–R265 is a binding site for substrate.

Belongs to the aerobic coproporphyrinogen-III oxidase family. In terms of assembly, homodimer. A divalent metal cation serves as cofactor.

Its subcellular location is the cytoplasm. It carries out the reaction coproporphyrinogen III + O2 + 2 H(+) = protoporphyrinogen IX + 2 CO2 + 2 H2O. It functions in the pathway porphyrin-containing compound metabolism; protoporphyrin-IX biosynthesis; protoporphyrinogen-IX from coproporphyrinogen-III (O2 route): step 1/1. In terms of biological role, involved in the heme biosynthesis. Catalyzes the aerobic oxidative decarboxylation of propionate groups of rings A and B of coproporphyrinogen-III to yield the vinyl groups in protoporphyrinogen-IX. The protein is Oxygen-dependent coproporphyrinogen-III oxidase of Coxiella burnetii (strain RSA 331 / Henzerling II).